Consider the following 165-residue polypeptide: S-(2-succino)cysteine N-acetyltransferase (165 aa).

An N-acetyltransferase domain is found at 3–162; sequence PRYRLAVERD…ITVYMKKQLR (160 aa).

Belongs to the acetyltransferase family.

The enzyme catalyses S-(2-succino)-L-cysteine + acetyl-CoA = N-acetyl-S-(2-succino)-L-cysteine + CoA + H(+). The protein operates within amino-acid biosynthesis; L-cysteine biosynthesis. Catalyzes the N-acetylation of S-(2-succino)cysteine. Is involved in a S-(2-succino)cysteine (2SC) degradation pathway that allows B.subtilis to grow on 2SC as a sole sulfur source, via its metabolization to cysteine. Moreover, 2SC is a toxic compound in B.subtilis at high exogenous concentrations, and this enzyme relieves 2SC toxicity via N-acetylation. This is S-(2-succino)cysteine N-acetyltransferase from Bacillus subtilis (strain 168).